Here is a 681-residue protein sequence, read N- to C-terminus: Macrolide export ATP-binding/permease protein MacB (681 aa).

The ABC transporter domain maps to 6-244 (LKLAAVTRRF…FAEVGVGAAA (239 aa)). 42 to 49 (GASGSGKS) serves as a coordination point for ATP. Positions 246-274 (TETAADTRSAPASGDAPPPANNDTAADPA) are disordered. The next 4 helical transmembrane spans lie at 306 to 326 (LLTMLGIIIGITSVVSIVAVG), 554 to 574 (LTLLLSLIAVISLVVGGIGVM), 611 to 631 (LVCLLGGTIGIALSFGLGALF), and 644 to 664 (AGAIVTAFVCSTLTGVIFGFM).

Belongs to the ABC transporter superfamily. Macrolide exporter (TC 3.A.1.122) family. In terms of assembly, homodimer.

The protein resides in the cell inner membrane. In terms of biological role, non-canonical ABC transporter that contains transmembrane domains (TMD), which form a pore in the inner membrane, and an ATP-binding domain (NBD), which is responsible for energy generation. Confers resistance against macrolides. The sequence is that of Macrolide export ATP-binding/permease protein MacB from Burkholderia cenocepacia (strain HI2424).